A 2284-amino-acid polypeptide reads, in one-letter code: RNA1 polyprotein (2284 aa).

Topologically, residues cysteine 567–threonine 1172 are cytoplasmic. The region spanning valine 750 to tyrosine 918 is the SF3 helicase domain. Glycine 780–threonine 787 contributes to the ATP binding site. A helical transmembrane segment spans residues leucine 1173–leucine 1193. The Lumenal segment spans residues alanine 1194–cysteine 1216. O-(5'-phospho-RNA)-serine is present on serine 1217. The Peptidase C3 domain maps to glycine 1242 to phenylalanine 1457. Active-site for picornain 3C-like protease activity residues include histidine 1283, glutamate 1327, and cysteine 1419. One can recognise a RdRp catalytic domain in the interval aspartate 1727–phenylalanine 1851.

Belongs to the nepoviruses RNA1 polyprotein family. Post-translationally, specific enzymatic cleavages by picornain 3C-like protease in vivo yield mature proteins. Picornain 3C-like protease is autocatalytically processed. In terms of processing, VPg is uridylylated by the polymerase and is covalently linked to the 5'-end of genomic RNA. This uridylylated form acts as a nucleotide-peptide primer for the polymerase.

The protein resides in the host endoplasmic reticulum lumen. It localises to the host endoplasmic reticulum membrane. The catalysed reaction is RNA(n) + a ribonucleoside 5'-triphosphate = RNA(n+1) + diphosphate. Picornain 3C-like protease is a thiol protease that cleaves the P1 and P2 polyproteins. This Vitis vinifera (Grape) protein is RNA1 polyprotein.